The primary structure comprises 215 residues: C' protein (215 aa).

Residues 12-34 (MPSFLKKILKLRGRRQEDESRSR) form a disordered region. An involved in self-degradation and in host STAT1 degradation region spans residues 15 to 22 (FLKKILKL).

It belongs to the respirovirus protein C family. In terms of assembly, the different isoforms interact (via C-terminus) with unphosphorylated and phosphorylated human STAT1 (via N-terminus), favoring the formation of parallel STAT1 homodimers. The different isoforms do not interact with host STAT2. C protein interacts with L protein; this interaction has an inhibitory effect on viral transcription and replication. Post-translationally, Y1 and Y2 proteins are produced not only by alternative initiation, but also by proteolytic cleavage of C'. Only alternative initiation is detected in vitro, whereas in vivo cleavage seems to be predominant.

It localises to the host cytoplasm. Its subcellular location is the virion. The different isoforms prevent the establishment of cellular antiviral state by blocking the interferon-alpha/beta (IFN-alpha/beta) and IFN-gamma signaling pathways. They inhibit IFN-alpha/beta induced tyrosine phosphorylation of STAT1 and STAT2. Blocking the IFN-alpha/beta pathway requires binding to STAT1 in the cytoplasm. They inhibit IFN-gamma induced serine phosphorylation of STAT1. Block the IFN-gamma pathway by binding to and stabilizing the parallel form of the STAT1 dimer, further inducing high-molecular-weight complex (HMWC) formation and inhibition of transcription by IFN-gamma. May also have a role in preventing the cell to enter apoptosis. Modulate regulation of viral transcription and replication. Overexpression inhibits the viral RNA polymerase. The absence of all C', C, Y1 and Y2 proteins leads to viral delayed growth. Plays an important role in virion particles release. Modulates virion shape. This Sendai virus (strain Z) (SeV) protein is C' protein (P/V/C).